A 244-amino-acid polypeptide reads, in one-letter code: Thiol S-methyltransferase TMT1B (244 aa).

The first 23 residues, 1-23 (MDILVPLLQLLVLLLTLPLHLMA), serve as a signal peptide directing secretion.

Belongs to the methyltransferase superfamily. As to expression, expressed in the liver.

It localises to the endoplasmic reticulum membrane. The protein localises to the lipid droplet. Its subcellular location is the microsome. It is found in the cytoplasm. The protein resides in the cytosol. The catalysed reaction is a thiol + S-adenosyl-L-methionine = a methyl thioether + S-adenosyl-L-homocysteine + H(+). Thiol S-methyltransferase that catalyzes the transfer of a methyl group from S-adenosyl-L-methionine to alkyl and phenolic thiol-containing acceptor substrates. Together with TMT1B accounts for most of S-thiol methylation activity in the endoplasmic reticulum of hepatocytes. Selectively methylates S-centered nucleophiles from metabolites such as hydrogen sulfide and dithiothreitol. The chain is Thiol S-methyltransferase TMT1B from Homo sapiens (Human).